The sequence spans 172 residues: uncharacterized protein (172 aa).

Transmembrane regions (helical) follow at residues 1–21, 41–61, 72–92, and 136–156; these read MLFINITFACILAIRFYSLSI, NSTLLSIAHVAFYFAAIIEAN, QIGLAILIFAIAMLFYVIYEL, and FCQAKYTALVGLPIYLLILAV.

It is found in the cell membrane. This is an uncharacterized protein from Haemophilus influenzae (strain ATCC 51907 / DSM 11121 / KW20 / Rd).